A 78-amino-acid polypeptide reads, in one-letter code: Small ribosomal subunit protein bS20 (78 aa).

A disordered region spans residues 1–34; the sequence is MANIKSNLKRNKQNRARHTVVHSQTSAVKTQIKK. Over residues 7–20 the composition is skewed to basic residues; the sequence is NLKRNKQNRARHTV. Polar residues predominate over residues 21–34; it reads VHSQTSAVKTQIKK.

It belongs to the bacterial ribosomal protein bS20 family.

In terms of biological role, binds directly to 16S ribosomal RNA. The sequence is that of Small ribosomal subunit protein bS20 from Malacoplasma penetrans (strain HF-2) (Mycoplasma penetrans).